Here is a 65-residue protein sequence, read N- to C-terminus: Large ribosomal subunit protein bL35 (65 aa).

The interval 1–40 (MPKMKTNSGSKKRFALTGTGKIKRKHAFHSHILTKKSKKR) is disordered. Residues 21 to 40 (KIKRKHAFHSHILTKKSKKR) are compositionally biased toward basic residues.

Belongs to the bacterial ribosomal protein bL35 family.

This is Large ribosomal subunit protein bL35 from Bacteroides fragilis (strain ATCC 25285 / DSM 2151 / CCUG 4856 / JCM 11019 / LMG 10263 / NCTC 9343 / Onslow / VPI 2553 / EN-2).